A 366-amino-acid polypeptide reads, in one-letter code: 1-deoxy-D-xylulose 5-phosphate reductoisomerase (366 aa).

Threonine 7, glycine 8, serine 9, isoleucine 10, glycine 31, asparagine 33, and asparagine 111 together coordinate NADPH. Residue lysine 112 coordinates 1-deoxy-D-xylulose 5-phosphate. Glutamate 113 contributes to the NADPH binding site. Aspartate 131 contributes to the Mn(2+) binding site. 1-deoxy-D-xylulose 5-phosphate-binding residues include serine 132, glutamate 133, serine 162, and histidine 185. Position 133 (glutamate 133) interacts with Mn(2+). Residue glycine 191 participates in NADPH binding. Residues serine 198, asparagine 203, lysine 204, and glutamate 207 each coordinate 1-deoxy-D-xylulose 5-phosphate. Position 207 (glutamate 207) interacts with Mn(2+).

This sequence belongs to the DXR family. Mg(2+) serves as cofactor. It depends on Mn(2+) as a cofactor.

The catalysed reaction is 2-C-methyl-D-erythritol 4-phosphate + NADP(+) = 1-deoxy-D-xylulose 5-phosphate + NADPH + H(+). The protein operates within isoprenoid biosynthesis; isopentenyl diphosphate biosynthesis via DXP pathway; isopentenyl diphosphate from 1-deoxy-D-xylulose 5-phosphate: step 1/6. Functionally, catalyzes the NADPH-dependent rearrangement and reduction of 1-deoxy-D-xylulose-5-phosphate (DXP) to 2-C-methyl-D-erythritol 4-phosphate (MEP). The protein is 1-deoxy-D-xylulose 5-phosphate reductoisomerase of Nautilia profundicola (strain ATCC BAA-1463 / DSM 18972 / AmH).